The sequence spans 146 residues: Large ribosomal subunit protein uL13 (146 aa).

It belongs to the universal ribosomal protein uL13 family. Part of the 50S ribosomal subunit.

Its function is as follows. This protein is one of the early assembly proteins of the 50S ribosomal subunit, although it is not seen to bind rRNA by itself. It is important during the early stages of 50S assembly. This Sulfurisphaera tokodaii (strain DSM 16993 / JCM 10545 / NBRC 100140 / 7) (Sulfolobus tokodaii) protein is Large ribosomal subunit protein uL13.